The primary structure comprises 147 residues: Large ribosomal subunit protein uL13 (147 aa).

It belongs to the universal ribosomal protein uL13 family. As to quaternary structure, part of the 50S ribosomal subunit.

Its function is as follows. This protein is one of the early assembly proteins of the 50S ribosomal subunit, although it is not seen to bind rRNA by itself. It is important during the early stages of 50S assembly. The chain is Large ribosomal subunit protein uL13 from Limosilactobacillus fermentum (strain NBRC 3956 / LMG 18251) (Lactobacillus fermentum).